The sequence spans 270 residues: MTKVVVTGAAGRMGTQIVRLVRATPGLSVSGAVERAGSPAIGKDAGTLAGGEPLGVAVVDDLAKALPGADVVIDFTSHEASVRHAQACAAAGVALVIGSTGFTPDAKAKVAEAARKVPVVLSPNMSVGVNVVFELVRQAARVLGDAYDVEVVEIHHKHKRDAPSGTAVRLGEVAAEALGRAPADALAYSRHGILGERPPWQIGIQTLRGGDVVGEHTVFFCGEGERVEITHRATSREQFARGAARAAAWLPGKAPGVYDMADVLGLRGGK.

NAD(+) is bound by residues 8–13 (GAAGRM) and E34. R35 serves as a coordination point for NADP(+). NAD(+)-binding positions include 98-100 (GST) and 122-125 (SPNM). H155 serves as the catalytic Proton donor/acceptor. H156 contributes to the (S)-2,3,4,5-tetrahydrodipicolinate binding site. K159 (proton donor) is an active-site residue. 165–166 (GT) is a binding site for (S)-2,3,4,5-tetrahydrodipicolinate.

The protein belongs to the DapB family.

The protein resides in the cytoplasm. The catalysed reaction is (S)-2,3,4,5-tetrahydrodipicolinate + NAD(+) + H2O = (2S,4S)-4-hydroxy-2,3,4,5-tetrahydrodipicolinate + NADH + H(+). The enzyme catalyses (S)-2,3,4,5-tetrahydrodipicolinate + NADP(+) + H2O = (2S,4S)-4-hydroxy-2,3,4,5-tetrahydrodipicolinate + NADPH + H(+). It functions in the pathway amino-acid biosynthesis; L-lysine biosynthesis via DAP pathway; (S)-tetrahydrodipicolinate from L-aspartate: step 4/4. Functionally, catalyzes the conversion of 4-hydroxy-tetrahydrodipicolinate (HTPA) to tetrahydrodipicolinate. This Anaeromyxobacter dehalogenans (strain 2CP-C) protein is 4-hydroxy-tetrahydrodipicolinate reductase.